Here is a 201-residue protein sequence, read N- to C-terminus: DNA polymerase epsilon subunit C (201 aa).

2 disordered regions span residues Lys102–Arg165 and Ser178–Pro201. The span at Val117–Glu144 shows a compositional bias: acidic residues. 2 stretches are compositionally biased toward basic and acidic residues: residues Pro145–Thr164 and Val182–Pro201. Phosphoserine occurs at positions 186, 188, and 189.

DNA polymerase epsilon is a heterotetramer consisting of POL2, DPB2, DPB3 and DPB4.

It localises to the nucleus. In terms of biological role, as accessory component of the DNA polymerase epsilon (DNA polymerase II) participates in chromosomal DNA replication. It is required during synthesis of the leading and lagging DNA strands at the replication fork and binds at/or near replication origins and moves along DNA with the replication fork. It has 3'-5' proofreading exonuclease activity that correct errors arising during DNA replication. It is also involved in DNA synthesis during DNA repair. The polypeptide is DNA polymerase epsilon subunit C (DPB3) (Saccharomyces cerevisiae (strain ATCC 204508 / S288c) (Baker's yeast)).